The primary structure comprises 539 residues: Efflux pump roqT (539 aa).

Residues 1 to 25 are disordered; that stretch reads MEKEVATDPLPQEIPSDAPDEGGSL. Helical transmembrane passes span 36 to 56, 108 to 128, 133 to 153, 160 to 180, 191 to 211, 233 to 253, 262 to 282, 305 to 325, 338 to 360, 362 to 384, 395 to 415, and 502 to 522; these read VSLT…VTII, LFLF…VGLI, IAGL…AQTV, VFTA…PPLG, WCFY…LFFF, IGSF…QWGG, RIIV…AVQI, WFAI…PIWF, VMNL…LVTI, GYYN…LLST, IGYQ…PFMV, and AFYV…ALEW.

The protein belongs to the major facilitator superfamily. TCR/Tet family.

It localises to the membrane. Functionally, efflux pump; part of the gene cluster that mediates the biosynthesis of the mycotoxins roquefortine C and meleagrin. The polypeptide is Efflux pump roqT (Penicillium rubens (strain ATCC 28089 / DSM 1075 / NRRL 1951 / Wisconsin 54-1255) (Penicillium chrysogenum)).